Consider the following 52-residue polypeptide: Ornatin-C (52 aa).

The short motif at 42 to 44 is the Cell attachment site element; sequence RGD.

This sequence belongs to the ornatin family.

It is found in the secreted. Its function is as follows. Potent inhibitor of fibrinogen interaction with platelet receptors expressed on glycoprotein IIb-IIIa complex. May prevent blood from clotting during either feeding and/or storage of ingested blood. This chain is Ornatin-C, found in Placobdella ornata (Turtle leech).